A 552-amino-acid polypeptide reads, in one-letter code: Transcription factor kayak (552 aa).

2 disordered regions span residues 110 to 145 and 177 to 234; these read LAQG…TDST and GAAS…KRRV. A compositionally biased stretch (polar residues) spans 111-127; the sequence is AQGSDSEDSNASYNDTQ. A compositionally biased stretch (low complexity) spans 135–145; the sequence is TDTSSAHTDST. Residues 177-192 are compositionally biased toward polar residues; sequence GAASVGSSNANTSNTP. A bZIP domain is found at 212–275; it reads EQKRAVRRER…NQLEYCLAAH (64 aa). The basic motif stretch occupies residues 214 to 233; sequence KRAVRRERNKQAAARCRKRR. The tract at residues 240–247 is leucine-zipper; it reads LTEEVEQL. Over residues 304–325 the composition is skewed to low complexity; the sequence is AGSSGSGASSHHNHNSNDSSNG. Disordered regions lie at residues 304–346, 365–390, and 514–552; these read AGSS…PLDL, LDGA…TLPP, and GGTG…LVSL. Polar residues predominate over residues 333–343; it reads TLNSTGRSNSP. S342 carries the post-translational modification Phosphoserine.

This sequence belongs to the bZIP family. Fos subfamily. As to quaternary structure, homodimer. Heterodimer with Jra. The kay-Jra heterodimer binds more stably to the AP-1 site than either of the two proteins alone.

The protein localises to the nucleus. Developmentally regulated transcription factor AP-1 binds and recognizes the enhancer DNA sequence: 5'-TGA[CG]TCA-3'. May play a role in the function or determination of a particular subset of cells in the developing embryo. It is able to carry out its function either independently of or in conjunction with Jra. The polypeptide is Transcription factor kayak (Drosophila yakuba (Fruit fly)).